We begin with the raw amino-acid sequence, 150 residues long: 6,7-dimethyl-8-ribityllumazine synthase (150 aa).

5-amino-6-(D-ribitylamino)uracil is bound by residues Phe-11, 43-45 (VYD), and 67-69 (AVI). Residue 72 to 73 (AT) participates in (2S)-2-hydroxy-3-oxobutyl phosphate binding. The Proton donor role is filled by His-75. Leu-100 provides a ligand contact to 5-amino-6-(D-ribitylamino)uracil. Residue Arg-115 participates in (2S)-2-hydroxy-3-oxobutyl phosphate binding.

The protein belongs to the DMRL synthase family.

It carries out the reaction (2S)-2-hydroxy-3-oxobutyl phosphate + 5-amino-6-(D-ribitylamino)uracil = 6,7-dimethyl-8-(1-D-ribityl)lumazine + phosphate + 2 H2O + H(+). The protein operates within cofactor biosynthesis; riboflavin biosynthesis; riboflavin from 2-hydroxy-3-oxobutyl phosphate and 5-amino-6-(D-ribitylamino)uracil: step 1/2. Catalyzes the formation of 6,7-dimethyl-8-ribityllumazine by condensation of 5-amino-6-(D-ribitylamino)uracil with 3,4-dihydroxy-2-butanone 4-phosphate. This is the penultimate step in the biosynthesis of riboflavin. This Pyrobaculum aerophilum (strain ATCC 51768 / DSM 7523 / JCM 9630 / CIP 104966 / NBRC 100827 / IM2) protein is 6,7-dimethyl-8-ribityllumazine synthase.